A 256-amino-acid polypeptide reads, in one-letter code: Probable aquaporin TIP4-2 (256 aa).

The next 5 helical transmembrane spans lie at 25–45, 59–79, 86–108, 146–166, and 178–198; these read AVAGELLFTFLFVFIGVASTI, AVTAAAMAQALVVAVLATAGF, LNPAVTLSLAVGGHITLFRSALY, GVAAEAVFTFTLLLVICATIL, and PLLTGLLVGANTVAGGALTGA. The NPA 1 motif lies at 87-89; the sequence is NPA. Residues 201-203 carry the NPA 2 motif; it reads NPA. A helical membrane pass occupies residues 220 to 240; that stretch reads VYWVGPLAGGPLAVVAYELLF.

It belongs to the MIP/aquaporin (TC 1.A.8) family. TIP (TC 1.A.8.10) subfamily. As to expression, expressed in roots, leaves and anthers.

The protein localises to the vacuole membrane. Its function is as follows. Aquaporins facilitate the transport of water and small neutral solutes across cell membranes. May be involved in transport from the vacuolar compartment to the cytoplasm. The sequence is that of Probable aquaporin TIP4-2 (TIP4-2) from Oryza sativa subsp. japonica (Rice).